Here is a 194-residue protein sequence, read N- to C-terminus: Protein GrpE (194 aa).

The span at 1-14 shows a compositional bias: basic and acidic residues; sequence MSKMNPNEKKENAS. The disordered stretch occupies residues 1–48; it reads MSKMNPNEKKENASKNENVNNEEATNLQEEQSNAADEAAGSDNVSGEV. Polar residues predominate over residues 24-34; it reads ATNLQEEQSNA.

It belongs to the GrpE family. Homodimer.

The protein localises to the cytoplasm. Its function is as follows. Participates actively in the response to hyperosmotic and heat shock by preventing the aggregation of stress-denatured proteins, in association with DnaK and GrpE. It is the nucleotide exchange factor for DnaK and may function as a thermosensor. Unfolded proteins bind initially to DnaJ; upon interaction with the DnaJ-bound protein, DnaK hydrolyzes its bound ATP, resulting in the formation of a stable complex. GrpE releases ADP from DnaK; ATP binding to DnaK triggers the release of the substrate protein, thus completing the reaction cycle. Several rounds of ATP-dependent interactions between DnaJ, DnaK and GrpE are required for fully efficient folding. The sequence is that of Protein GrpE from Parabacteroides distasonis (strain ATCC 8503 / DSM 20701 / CIP 104284 / JCM 5825 / NCTC 11152).